The chain runs to 477 residues: MDAVELARRLQEEATCSICLDYFTDPVMTACGHNFCRECIQMSWEKGKGKKGKKKQKGSFPCPECREMSPQRNLRPNRLLTKVAEMARQHPGLHKRDLCQIHQEPLKLFCQDDQTPICVVCREAQEHRMHRVLPLDEAAREYKLRLEEDIKYLREEMMKTETLQAKEEQTLTEWQERVKERRERILEEFQKVVLFLVEEERRLLQILKKEEDDTLGKLQDSKASLDHQSRSLDLILLQLEEQTQQEPLQMLQDVKDTLTRKESLSMQYPEVVLPVAIKTVCRVPGQIEVLKSFQEDVVPDPSTAYPYLLLYESRQRRYLSPPPEGSAPYSKDRFLAYPCAVGQKSFSSGRHYWEVGMNLTGDALWALGVCRDNVSRKDRVLKSPENGFWVVQLSKGKKHLPLLPNSIPVTLTEPPSHMGIFLDFQAGEVSFYSVNDGSHLHSFSQVAFPGPLLPFFCLGSPKSGQMVISTVTMWVKG.

An RING-type zinc finger spans residues 16 to 66 (CSICLDYFTDPVMTACGHNFCRECIQMSWEKGKGKKGKKKQKGSFPCPECR). The B box-type zinc-finger motif lies at 94-135 (HKRDLCQIHQEPLKLFCQDDQTPICVVCREAQEHRMHRVLPL). Residues cysteine 99, histidine 102, cysteine 121, and histidine 127 each contribute to the Zn(2+) site. The stretch at 135–225 (LDEAAREYKL…GKLQDSKASL (91 aa)) forms a coiled coil. One can recognise a B30.2/SPRY domain in the interval 276–475 (AIKTVCRVPG…MVISTVTMWV (200 aa)).

This sequence belongs to the TRIM/RBCC family. In terms of assembly, interacts (via coiled coil) with TRIM44 (via coiled coil). Interacts with TRIM28; this interaction prevents TRIM28 activity on BCL2A1. Interacts with TRIM41; this interaction prevents TRIM41 activity on ZSCAN2. Interacts with BECN1. Interacts with NFATC3 and NFATC4; these interactions prevent NFATC3 and NFATC4 nuclear localization. Auto-ubiquitinated. In terms of tissue distribution, expressed almost exclusively in the testis.

It localises to the cytoplasm. The protein resides in the lysosome. The catalysed reaction is S-ubiquitinyl-[E2 ubiquitin-conjugating enzyme]-L-cysteine + [acceptor protein]-L-lysine = [E2 ubiquitin-conjugating enzyme]-L-cysteine + N(6)-ubiquitinyl-[acceptor protein]-L-lysine.. It functions in the pathway protein modification; protein ubiquitination. In terms of biological role, E3 ubiquitin ligase that plays important roles in the regulation of neuronal apoptosis, selective autophagy or cell proliferation. Stimulates the degradation of kinetochore ZW10 interacting protein ZWINT in a proteasome-dependent manner, leading to negative regulation of cell proliferation. Inhibits autophagic degradation of diverse known targets while contributing to autophagy of midbodies. Autophagy-inhibitory activity involves MCL1, which TRIM17 assembles into complexes with the key autophagy regulator BECN1. Controls neuronal apoptosis by mediating ubiquitination and degradation of MCL1 to initiate neuronal death. In addition, regulates NFAT transcription factors NFATC3 and NFATC4 activities by preventing their nuclear localization, thus inhibiting their transcriptional activities. Decreases TRIM41-mediated degradation of ZSCAN2 thereby stimulating alpha-synuclein/SNCA transcription in neuronal cells. Prevents the E3 ubiquitin-ligase activity of TRIM28 and its interaction with anti-apoptotic BCL2A1, blocking TRIM28 from ubiquitinating BCL2A1. This is E3 ubiquitin-protein ligase TRIM17 (Trim17) from Rattus norvegicus (Rat).